Reading from the N-terminus, the 367-residue chain is Mannan endo-1,4-beta-mannosidase (367 aa).

A signal peptide spans 1-17 (MLLTALAVLFASTGCQA). Positions 79 and 176 each coordinate substrate. The active-site Proton donor is the Glu177. Cys192 and Cys259 are disulfide-bonded. Positions 205, 240, and 279 each coordinate substrate. Residue Glu308 is the Nucleophile of the active site. Trp337 provides a ligand contact to substrate.

Monomer. The disulfide bond between Cys-192 and Cys-259 has not been observed in X-ray crystallography. This may be a consequence of the X-ray radiation.

It carries out the reaction Random hydrolysis of (1-&gt;4)-beta-D-mannosidic linkages in mannans, galactomannans and glucomannans.. Functionally, hydrolyzes 1,4-beta linked polysaccharide backbones of mannans. Hydrolyzes mannohexaose (M6) preferentially to mannotriose (M4) and less preferentially to mannotetraose (M3), mannopentaose (M5), and mannobiose (M2); hydrolyzes M5 preferentially to M2, and M3, and less preferentially to mannotetraose M4; hydrolyzes M4 preferentially to M3, and less preferentially to mannose (M1), plus very little M2. Does not hydrolyze mannobiose or mannotriose. Does not hydrolyze xlyan, starch, cellulose or galactose. The sequence is that of Mannan endo-1,4-beta-mannosidase from Mytilus edulis (Blue mussel).